Reading from the N-terminus, the 125-residue chain is MARSATLAAAALALCLLLAPPGLAWYKPAAGHSSYSVGRAAGLLSGLRRSPYARRSQPYRGAEPPGGAGASPELQLHPRLRSLAVCVQDVAPNLQRCERLPDGRGTYQCKANVFLSLRAADCLAA.

Residues 1-24 (MARSATLAAAALALCLLLAPPGLA) form the signal peptide. Residues 54–73 (RRSQPYRGAEPPGGAGASPE) are disordered. Residues 56–125 (SQPYRGAEPP…SLRAADCLAA (70 aa)) constitute a propeptide that is removed on maturation.

Belongs to the neuropeptide B/W family. As to expression, widely expressed in the central nervous system. High levels are found in substantia nigra, hypothalamus, hippocampus, spinal cord, placenta and fetal brain; lower levels are found in testis, uterus and ovary. Also detected at high levels in colorectal adenocarcinoma.

Its subcellular location is the secreted. In terms of biological role, may be involved in the regulation of feeding, neuroendocrine system, memory, learning and in the afferent pain pathway. This Homo sapiens (Human) protein is Neuropeptide B (NPB).